The following is an 832-amino-acid chain: Receptor-interacting serine/threonine-protein kinase 4 (832 aa).

Residues 22 to 286 enclose the Protein kinase domain; that stretch reads FTGWEKVGSG…QGNGLNGELI (265 aa). Residues 28 to 36 and lysine 51 contribute to the ATP site; that span reads VGSGGFGQV. Residue lysine 51 forms a Glycyl lysine isopeptide (Lys-Gly) (interchain with G-Cter in ubiquitin) linkage. The active-site Proton acceptor is the aspartate 143. Lysine 145 participates in a covalent cross-link: Glycyl lysine isopeptide (Lys-Gly) (interchain with G-Cter in ubiquitin). 2 disordered regions span residues 325–368 and 389–424; these read QEIT…RLKR and SGVS…GVSS. The span at 329-342 shows a compositional bias: acidic residues; the sequence is SETEDLCEKPDDEV. Positions 343–359 are enriched in basic and acidic residues; sequence KETAHDLDVKSPPEPRS. Over residues 403-424 the composition is skewed to low complexity; the sequence is RSSSESKLPSSGSGKRLSGVSS. ANK repeat units lie at residues 485 to 514, 518 to 547, 551 to 580, 584 to 613, 617 to 647, 651 to 680, 684 to 713, 717 to 746, 750 to 780, and 782 to 811; these read SGAS…NPNL, RGST…SVNA, DQWT…SVNE, EGRT…DVSL, DAWL…SVNA, DGRT…DVNV, LAQT…GKEA, DGYT…DVLA, LNQT…DLFD, and QGLS…HINL.

The protein belongs to the protein kinase superfamily. TKL Ser/Thr protein kinase family. In terms of assembly, interacts with PRKCB. Interacts with TRAF1, TRAF2, TRAF3 and TRAF5. Interacts with BIRC2/c-IAP1, BIRC3/c-IAP2 and XIAP/BIRC4. In terms of processing, may be phosphorylated by MAP3K2 and MAP3K3. Post-translationally, proteolytically cleaved by during Fas-induced apoptosis. Cleavage at Asp-388 and Asp-426. Polyubiquitinated with 'Lys-48' and 'Lys-63'-linked chains by BIRC2/c-IAP1 and BIRC3/c-IAP2, leading to activation of NF-kappa-B. As to expression, expressed in hair follicles and skin.

It localises to the cytoplasm. The protein resides in the membrane. It carries out the reaction L-seryl-[protein] + ATP = O-phospho-L-seryl-[protein] + ADP + H(+). The enzyme catalyses L-threonyl-[protein] + ATP = O-phospho-L-threonyl-[protein] + ADP + H(+). Its function is as follows. Serine/threonine protein kinase. Required for embryonic skin development and correct skin homeostasis in adults, via phosphorylation of PKP1 and subsequent promotion of keratinocyte differentiation and cell adhesion. It is a direct transcriptional target of TP63. Plays a role in NF-kappa-B activation. This is Receptor-interacting serine/threonine-protein kinase 4 (RIPK4) from Homo sapiens (Human).